Reading from the N-terminus, the 350-residue chain is MFS transporter OpS2 (350 aa).

8 consecutive transmembrane segments (helical) span residues 3 to 23 (FLAGGASASVAAVGAGTVADL), 34 to 54 (GYFFLGPMLGPLVSPIIGGIL), 65 to 85 (WGAVVYGGLVWLSMIFLLPET), 141 to 161 (FMTCYYASISFACYYILNLAI), 174 to 194 (AIILGLLYIPSALGSIVASVV), 227 to 247 (MCENAWIPAFVFPAALLVFGW), 253 to 273 (IFWFAPIVVTFFFGLGNSLIF), and 312 to 332 (PLLGAIGTQWLFTGLAVICWA).

Belongs to the major facilitator superfamily.

It is found in the cell membrane. Functionally, MFS transporter; part of the gene cluster that mediates the biosynthesis of the bibenzoquinone oosporein, a metabolite required for fungal virulence that acts by evading host immunity to facilitate fungal multiplication in insects. The function of this putative MFS transporter remains unclear since its deletion leads to increased oosporein production. This Beauveria bassiana (strain ARSEF 2860) (White muscardine disease fungus) protein is MFS transporter OpS2.